The chain runs to 524 residues: Citrate exporter 1 (524 aa).

The segment at Met-1–His-49 is disordered. Residues Pro-34–Glu-45 are compositionally biased toward polar residues. A helical transmembrane segment spans residues Met-60–Pro-80. A glycan (N-linked (GlcNAc...) asparagine) is linked at Asn-90. Transmembrane regions (helical) follow at residues Leu-95–Gly-115, Pro-125–Lys-145, Ala-155–Ile-175, Gly-186–Phe-206, and Ile-215–Pro-235. An N-linked (GlcNAc...) asparagine glycan is attached at Asn-244. 6 helical membrane passes run Val-296–Ser-316, Ile-332–Tyr-352, Thr-395–Thr-415, Leu-417–Ile-437, Leu-459–Leu-479, and Pro-481–Val-501.

This sequence belongs to the major facilitator superfamily.

The protein resides in the cell membrane. The catalysed reaction is citrate(in) = citrate(out). In terms of biological role, transmembrane transporter that exports citrate across the cell membrane. The polypeptide is Citrate exporter 1 (Aspergillus niger (strain ATCC 1015 / CBS 113.46 / FGSC A1144 / LSHB Ac4 / NCTC 3858a / NRRL 328 / USDA 3528.7)).